A 390-amino-acid chain; its full sequence is L-rhamnonate dehydratase (390 aa).

H19 and R45 together coordinate substrate. Residues D211, E237, and E265 each contribute to the Mg(2+) site. H315 (proton acceptor) is an active-site residue. E335 contacts substrate.

Belongs to the mandelate racemase/muconate lactonizing enzyme family. RhamD subfamily. Mg(2+) serves as cofactor.

The catalysed reaction is L-rhamnonate = 2-dehydro-3-deoxy-L-rhamnonate + H2O. Its function is as follows. Catalyzes the dehydration of L-rhamnonate to 2-keto-3-deoxy-L-rhamnonate (KDR). In Saccharopolyspora erythraea (strain ATCC 11635 / DSM 40517 / JCM 4748 / NBRC 13426 / NCIMB 8594 / NRRL 2338), this protein is L-rhamnonate dehydratase.